The chain runs to 288 residues: MLVNIKQMLQHAKQHHYAVPHININNYEWAKAVLTAAQQAKSPIIVSTSEGALKYISGHQVVVPMVKGLVDALKITVPVALHLDHGSYEGCKAALQAGFSSIMFDGSHLPFQENFTKSKELIELAKQTNASVELEVGTLGGEEDGIVGQGELANIEECKQIATLKPDALAAGIGNIHGLYPDNWKGLNYELIEAIAKATNLPLVLHGGSGIPEADVKKAIGLGISKLNINTECQLAFAKAIREYVEAKKDLDTHNKGYDPRKLLKSPTQAIVDCCLEKMQLCGSTNKA.

Position 49 (S49) interacts with D-glyceraldehyde 3-phosphate. Residue D84 is the Proton donor of the active site. Zn(2+)-binding residues include H85, D105, E135, and H177. G178 contacts dihydroxyacetone phosphate. A Zn(2+)-binding site is contributed by H206. Dihydroxyacetone phosphate contacts are provided by residues 207-209 and 228-231; these read GGS and NINT.

It belongs to the class II fructose-bisphosphate aldolase family. In terms of assembly, homodimer. Requires Zn(2+) as cofactor.

It catalyses the reaction beta-D-fructose 1,6-bisphosphate = D-glyceraldehyde 3-phosphate + dihydroxyacetone phosphate. It functions in the pathway carbohydrate degradation; glycolysis; D-glyceraldehyde 3-phosphate and glycerone phosphate from D-glucose: step 4/4. Catalyzes the aldol condensation of dihydroxyacetone phosphate (DHAP or glycerone-phosphate) with glyceraldehyde 3-phosphate (G3P) to form fructose 1,6-bisphosphate (FBP) in gluconeogenesis and the reverse reaction in glycolysis. The polypeptide is Fructose-bisphosphate aldolase (fba) (Mycoplasma pneumoniae (strain ATCC 29342 / M129 / Subtype 1) (Mycoplasmoides pneumoniae)).